Consider the following 355-residue polypeptide: MNQKKKIMIVAGGSGGHVFPGLSVAHYLINHGYQVVWLGTADRIESKLVPQYGIDIKFIRINGWNGEKLHIKCIMPLFICLAIYQARKIIKYWKPDIVLGMGGYVSGPGGLAAWTCGVPLIIHEQNRIIGLTNRYLSIFSKKVLQGFPGTFPNAKMVGNPIRRAILAVPNPSRRWKGRVGPIRVLVIGGSQGAHILNKTIPNMAEKLSDKLIIWHQVGEQDFKKVIWAYQKIKQSYHRIVKFIDDIAQAYAWADILISRAGALTVSEVSIVGLPAIFVPFIHHKDRQQYWNAVPLVQAGAAKIIEQKNFTSDVVSAMLESWDRKTLCSMAQRARSIAAPNATQQVSQVIIEYLKK.

Residues 14–16 (SGG), Asn126, Arg162, Ser190, Ile243, 262–267 (ALTVSE), and Gln288 each bind UDP-N-acetyl-alpha-D-glucosamine.

The protein belongs to the glycosyltransferase 28 family. MurG subfamily.

It localises to the cell inner membrane. The catalysed reaction is di-trans,octa-cis-undecaprenyl diphospho-N-acetyl-alpha-D-muramoyl-L-alanyl-D-glutamyl-meso-2,6-diaminopimeloyl-D-alanyl-D-alanine + UDP-N-acetyl-alpha-D-glucosamine = di-trans,octa-cis-undecaprenyl diphospho-[N-acetyl-alpha-D-glucosaminyl-(1-&gt;4)]-N-acetyl-alpha-D-muramoyl-L-alanyl-D-glutamyl-meso-2,6-diaminopimeloyl-D-alanyl-D-alanine + UDP + H(+). It participates in cell wall biogenesis; peptidoglycan biosynthesis. Its function is as follows. Cell wall formation. Catalyzes the transfer of a GlcNAc subunit on undecaprenyl-pyrophosphoryl-MurNAc-pentapeptide (lipid intermediate I) to form undecaprenyl-pyrophosphoryl-MurNAc-(pentapeptide)GlcNAc (lipid intermediate II). This is UDP-N-acetylglucosamine--N-acetylmuramyl-(pentapeptide) pyrophosphoryl-undecaprenol N-acetylglucosamine transferase from Blochmanniella pennsylvanica (strain BPEN).